Here is a 349-residue protein sequence, read N- to C-terminus: Beta-hexosaminidase (349 aa).

Residues D64, R72, R138, and 168-169 (KH) contribute to the substrate site. H181 functions as the Proton donor/acceptor in the catalytic mechanism. The Nucleophile role is filled by D252.

The protein belongs to the glycosyl hydrolase 3 family. NagZ subfamily.

The protein resides in the cytoplasm. The enzyme catalyses Hydrolysis of terminal non-reducing N-acetyl-D-hexosamine residues in N-acetyl-beta-D-hexosaminides.. Its pathway is cell wall biogenesis; peptidoglycan recycling. Its function is as follows. Plays a role in peptidoglycan recycling by cleaving the terminal beta-1,4-linked N-acetylglucosamine (GlcNAc) from peptide-linked peptidoglycan fragments, giving rise to free GlcNAc, anhydro-N-acetylmuramic acid and anhydro-N-acetylmuramic acid-linked peptides. This Nitrosospira multiformis (strain ATCC 25196 / NCIMB 11849 / C 71) protein is Beta-hexosaminidase.